The following is a 720-amino-acid chain: Connector enhancer of kinase suppressor of ras 1 (720 aa).

The SAM domain maps to 7–70 (WTPGKVATWL…LGGVEQLQAL (64 aa)). The CRIC domain occupies 78 to 164 (NLQSLTEGLL…QVLHEDGPAA (87 aa)). The 90-residue stretch at 196–285 (KAVLEQVQLD…GLSLVLKKIP (90 aa)) folds into the PDZ domain. Positions 285-390 (PIPETPPQTP…RKKSKGLATR (106 aa)) are disordered. Residues 304–317 (RSPSLSLAPLSPRA) show a composition bias toward low complexity. Phosphoserine occurs at positions 307 and 314. Over residues 348 to 359 (EPLPIPPEPPAI) the composition is skewed to pro residues. The span at 379–390 (VGRKKSKGLATR) shows a compositional bias: basic residues. Positions 403-502 (RPDCDGWLLL…WVRHLITCIS (100 aa)) constitute a PH domain. The interval 504 to 573 (YQSPGRAPPP…TSFGSLTDSS (70 aa)) is disordered. Acidic residues predominate over residues 518–530 (CYSETEAEDPDDE). Residues 533–546 (SHSASPSPAQAGSP) are compositionally biased toward low complexity. Residues 553–571 (PAATPTQRSPRTSFGSLTD) are compositionally biased toward polar residues. Residues 615–646 (QLNERVHRVRALQSTLKAKLQELQVLEEVLGD) are a coiled coil. The disordered stretch occupies residues 676–720 (QAEGSSHILTSDSTEQSPHSLPSDPEEHSHLCPLTSESSLRPPDL). Residues 678-695 (EGSSHILTSDSTEQSPHS) are compositionally biased toward polar residues.

It belongs to the CNKSR family. As to quaternary structure, interacts with RHO and RALGDS. Phosphorylated on tyrosine.

It is found in the cytoplasm. Its subcellular location is the membrane. In terms of biological role, may function as an adapter protein or regulator of Ras signaling pathways. This chain is Connector enhancer of kinase suppressor of ras 1 (CNKSR1), found in Homo sapiens (Human).